Here is a 235-residue protein sequence, read N- to C-terminus: MTKAQNVDPSEIKKFEEMASRWWDLEGEFKPLHQINPLRLNYVLEKADGLFGKKVLDVGCGGGILAESMAKEGATVTGLDMGKEPLEVARLHALETGTKLTYIQSTIEDHAAENAGTYDVVTCMEMLEHVPDPLSVIRSCAALVKPGGHVFFSTLNRNIKSYLFAIVGAEKLLKIVPEGTHDHEKFIKPAEMMKMIDQTDLTEMGITGLHYNPLNDSYKLGRNVDVNYIVHTKKY.

Positions 39, 59, 80, and 124 each coordinate S-adenosyl-L-methionine.

It belongs to the methyltransferase superfamily. UbiG/COQ3 family.

The enzyme catalyses a 3-demethylubiquinol + S-adenosyl-L-methionine = a ubiquinol + S-adenosyl-L-homocysteine + H(+). It carries out the reaction a 3-(all-trans-polyprenyl)benzene-1,2-diol + S-adenosyl-L-methionine = a 2-methoxy-6-(all-trans-polyprenyl)phenol + S-adenosyl-L-homocysteine + H(+). It participates in cofactor biosynthesis; ubiquinone biosynthesis. O-methyltransferase that catalyzes the 2 O-methylation steps in the ubiquinone biosynthetic pathway. This chain is Ubiquinone biosynthesis O-methyltransferase, found in Vibrio parahaemolyticus serotype O3:K6 (strain RIMD 2210633).